The sequence spans 185 residues: Ribosome-recycling factor (185 aa).

K162 carries the post-translational modification N6-acetyllysine.

It belongs to the RRF family.

The protein localises to the cytoplasm. In terms of biological role, responsible for the release of ribosomes from messenger RNA at the termination of protein biosynthesis. May increase the efficiency of translation by recycling ribosomes from one round of translation to another. The sequence is that of Ribosome-recycling factor from Shigella boydii serotype 18 (strain CDC 3083-94 / BS512).